A 136-amino-acid polypeptide reads, in one-letter code: Large ribosomal subunit protein bL21 (136 aa).

It belongs to the bacterial ribosomal protein bL21 family. In terms of assembly, part of the 50S ribosomal subunit. Contacts protein L20.

Its function is as follows. This protein binds to 23S rRNA in the presence of protein L20. In Gloeothece citriformis (strain PCC 7424) (Cyanothece sp. (strain PCC 7424)), this protein is Large ribosomal subunit protein bL21.